The sequence spans 577 residues: 2-succinyl-5-enolpyruvyl-6-hydroxy-3-cyclohexene-1-carboxylate synthase (577 aa).

Belongs to the TPP enzyme family. MenD subfamily. As to quaternary structure, homodimer. It depends on Mg(2+) as a cofactor. Requires Mn(2+) as cofactor. Thiamine diphosphate serves as cofactor.

The enzyme catalyses isochorismate + 2-oxoglutarate + H(+) = 5-enolpyruvoyl-6-hydroxy-2-succinyl-cyclohex-3-ene-1-carboxylate + CO2. Its pathway is quinol/quinone metabolism; 1,4-dihydroxy-2-naphthoate biosynthesis; 1,4-dihydroxy-2-naphthoate from chorismate: step 2/7. The protein operates within cofactor biosynthesis; phylloquinone biosynthesis. In terms of biological role, catalyzes the thiamine diphosphate-dependent decarboxylation of 2-oxoglutarate and the subsequent addition of the resulting succinic semialdehyde-thiamine pyrophosphate anion to isochorismate to yield 2-succinyl-5-enolpyruvyl-6-hydroxy-3-cyclohexene-1-carboxylate (SEPHCHC). The protein is 2-succinyl-5-enolpyruvyl-6-hydroxy-3-cyclohexene-1-carboxylate synthase of Synechococcus sp. (strain CC9311).